The following is a 248-amino-acid chain: Probable S-methyl-5'-thioinosine phosphorylase (248 aa).

Phosphate-binding positions include T12 and 54–55 (RH). A substrate-binding site is contributed by M187. A phosphate-binding site is contributed by T188. 211–213 (NWA) is a substrate binding site.

The protein belongs to the PNP/MTAP phosphorylase family. MTAP subfamily. Homotrimer.

The catalysed reaction is S-methyl-5'-thioinosine + phosphate = 5-(methylsulfanyl)-alpha-D-ribose 1-phosphate + hypoxanthine. It functions in the pathway purine metabolism; purine nucleoside salvage. Catalyzes the reversible phosphorylation of S-methyl-5'-thioinosine (MTI) to hypoxanthine and 5-methylthioribose-1-phosphate. Involved in the breakdown of S-methyl-5'-thioadenosine (MTA), a major by-product of polyamine biosynthesis. Catabolism of (MTA) occurs via deamination to MTI and phosphorolysis to hypoxanthine. In Xylella fastidiosa (strain Temecula1 / ATCC 700964), this protein is Probable S-methyl-5'-thioinosine phosphorylase.